Reading from the N-terminus, the 150-residue chain is Transcriptional repressor NrdR (150 aa).

A zinc finger lies at cysteine 3–cysteine 33. In terms of domain architecture, ATP-cone spans valine 48 to lysine 138.

The protein belongs to the NrdR family. Zn(2+) serves as cofactor.

Negatively regulates transcription of bacterial ribonucleotide reductase nrd genes and operons by binding to NrdR-boxes. This Herpetosiphon aurantiacus (strain ATCC 23779 / DSM 785 / 114-95) protein is Transcriptional repressor NrdR.